Reading from the N-terminus, the 425-residue chain is WD repeat-containing protein JIP5 (425 aa).

WD repeat units follow at residues 9 to 48 (QLDS…SDDS), 71 to 110 (RHKG…VTAK), 117 to 158 (LANG…AKSA), 219 to 262 (ELLS…DQDE), and 321 to 358 (LRQE…DVPE). The segment at 354 to 425 (QDVPEDDEDE…HGILHFSGLA (72 aa)) is disordered. Composition is skewed to acidic residues over residues 356 to 368 (VPED…EEEA) and 378 to 396 (SDED…EDDE). A compositionally biased stretch (basic residues) spans 399-414 (QKRKKRRKGKGGKQAK).

Belongs to the WD repeat WDR55 family.

It is found in the nucleus. The protein resides in the nucleolus. The protein is WD repeat-containing protein JIP5 (JIP5) of Phaeosphaeria nodorum (strain SN15 / ATCC MYA-4574 / FGSC 10173) (Glume blotch fungus).